A 61-amino-acid polypeptide reads, in one-letter code: Chromatin protein Cren7 (61 aa).

The protein belongs to the Cren7 family. In terms of assembly, monomer. Post-translationally, methylated at multiple sites, to varying extents.

The protein localises to the chromosome. Its subcellular location is the cytoplasm. In terms of biological role, a chromatin protein, binds double-stranded DNA without sequence specificity. Constrains negative DNA supercoils. This Caldivirga maquilingensis (strain ATCC 700844 / DSM 13496 / JCM 10307 / IC-167) protein is Chromatin protein Cren7.